A 116-amino-acid polypeptide reads, in one-letter code: Biogenesis of lysosome-related organelles complex 1 subunit CNL1 (116 aa).

Residues 63–95 adopt a coiled-coil conformation; that stretch reads DIVDVNIQSFKDILSKCEELENYFTMLDQIEMI.

The protein belongs to the BLOC1S4 family. In terms of assembly, component of the biogenesis of lysosome-related organelles complex-1 (BLOC-1).

It is found in the cytoplasm. Component of the biogenesis of lysosome-related organelles complex-1 (BLOC-1), a complex that is involved in endosomal cargo sorting. The sequence is that of Biogenesis of lysosome-related organelles complex 1 subunit CNL1 (CLN1) from Vanderwaltozyma polyspora (strain ATCC 22028 / DSM 70294 / BCRC 21397 / CBS 2163 / NBRC 10782 / NRRL Y-8283 / UCD 57-17) (Kluyveromyces polysporus).